Reading from the N-terminus, the 482-residue chain is Aspartyl/glutamyl-tRNA(Asn/Gln) amidotransferase subunit B (482 aa).

It belongs to the GatB/GatE family. GatB subfamily. As to quaternary structure, heterotrimer of A, B and C subunits.

It catalyses the reaction L-glutamyl-tRNA(Gln) + L-glutamine + ATP + H2O = L-glutaminyl-tRNA(Gln) + L-glutamate + ADP + phosphate + H(+). The catalysed reaction is L-aspartyl-tRNA(Asn) + L-glutamine + ATP + H2O = L-asparaginyl-tRNA(Asn) + L-glutamate + ADP + phosphate + 2 H(+). Its function is as follows. Allows the formation of correctly charged Asn-tRNA(Asn) or Gln-tRNA(Gln) through the transamidation of misacylated Asp-tRNA(Asn) or Glu-tRNA(Gln) in organisms which lack either or both of asparaginyl-tRNA or glutaminyl-tRNA synthetases. The reaction takes place in the presence of glutamine and ATP through an activated phospho-Asp-tRNA(Asn) or phospho-Glu-tRNA(Gln). This chain is Aspartyl/glutamyl-tRNA(Asn/Gln) amidotransferase subunit B, found in Thermotoga neapolitana (strain ATCC 49049 / DSM 4359 / NBRC 107923 / NS-E).